Here is a 405-residue protein sequence, read N- to C-terminus: Cytoplasmic tRNA 2-thiolation protein 2 (405 aa).

It belongs to the CTU2/NCS2 family.

The protein localises to the cytoplasm. Its pathway is tRNA modification; 5-methoxycarbonylmethyl-2-thiouridine-tRNA biosynthesis. Plays a central role in 2-thiolation of mcm(5)S(2)U at tRNA wobble positions of tRNA(Lys), tRNA(Glu) and tRNA(Gln). May act by forming a heterodimer with NCS6/CTU1 that ligates sulfur from thiocarboxylated URM1 onto the uridine of tRNAs at wobble position. The protein is Cytoplasmic tRNA 2-thiolation protein 2 of Drosophila simulans (Fruit fly).